The primary structure comprises 633 residues: uncharacterized protein (633 aa).

The segment at 12–43 is disordered; that stretch reads ESGTNNYSDTIANGNTLPPRSKKGHSGRRKRS. Polar residues predominate over residues 13–29; sequence SGTNNYSDTIANGNTLP. Over residues 31 to 42 the composition is skewed to basic residues; the sequence is RSKKGHSGRRKR. 2 consecutive transmembrane segments (helical) span residues 99 to 118 and 217 to 233; these read ILFG…SSAL and NCAF…ITAC. The tract at residues 593–612 is disordered; the sequence is DAETNKATGSAKSENIETKS.

It localises to the membrane. This is an uncharacterized protein from Saccharomyces cerevisiae (strain ATCC 204508 / S288c) (Baker's yeast).